The following is a 219-amino-acid chain: Ribose-5-phosphate isomerase A (219 aa).

Residues 28-31, 81-84, and 94-97 each bind substrate; these read TGST, DGAD, and KGGG. E103 acts as the Proton acceptor in catalysis. K121 provides a ligand contact to substrate.

The protein belongs to the ribose 5-phosphate isomerase family. Homodimer.

The catalysed reaction is aldehydo-D-ribose 5-phosphate = D-ribulose 5-phosphate. Its pathway is carbohydrate degradation; pentose phosphate pathway; D-ribose 5-phosphate from D-ribulose 5-phosphate (non-oxidative stage): step 1/1. Its function is as follows. Catalyzes the reversible conversion of ribose-5-phosphate to ribulose 5-phosphate. In Shewanella sp. (strain ANA-3), this protein is Ribose-5-phosphate isomerase A.